A 179-amino-acid chain; its full sequence is Cell division protein ZapC (179 aa).

The protein belongs to the ZapC family. As to quaternary structure, interacts directly with FtsZ.

It localises to the cytoplasm. In terms of biological role, contributes to the efficiency of the cell division process by stabilizing the polymeric form of the cell division protein FtsZ. Acts by promoting interactions between FtsZ protofilaments and suppressing the GTPase activity of FtsZ. This is Cell division protein ZapC from Tolumonas auensis (strain DSM 9187 / NBRC 110442 / TA 4).